The following is a 483-amino-acid chain: Glutamyl-tRNA(Gln) amidotransferase subunit A (483 aa).

Catalysis depends on charge relay system residues Lys-76 and Ser-151. Catalysis depends on Ser-175, which acts as the Acyl-ester intermediate.

This sequence belongs to the amidase family. GatA subfamily. Heterotrimer of A, B and C subunits.

The enzyme catalyses L-glutamyl-tRNA(Gln) + L-glutamine + ATP + H2O = L-glutaminyl-tRNA(Gln) + L-glutamate + ADP + phosphate + H(+). Its function is as follows. Allows the formation of correctly charged Gln-tRNA(Gln) through the transamidation of misacylated Glu-tRNA(Gln) in organisms which lack glutaminyl-tRNA synthetase. The reaction takes place in the presence of glutamine and ATP through an activated gamma-phospho-Glu-tRNA(Gln). This Azotobacter vinelandii (strain DJ / ATCC BAA-1303) protein is Glutamyl-tRNA(Gln) amidotransferase subunit A.